Reading from the N-terminus, the 263-residue chain is Imidazole glycerol phosphate synthase subunit HisF (263 aa).

Catalysis depends on residues D11 and D130.

The protein belongs to the HisA/HisF family. Heterodimer of HisH and HisF.

The protein resides in the cytoplasm. The catalysed reaction is 5-[(5-phospho-1-deoxy-D-ribulos-1-ylimino)methylamino]-1-(5-phospho-beta-D-ribosyl)imidazole-4-carboxamide + L-glutamine = D-erythro-1-(imidazol-4-yl)glycerol 3-phosphate + 5-amino-1-(5-phospho-beta-D-ribosyl)imidazole-4-carboxamide + L-glutamate + H(+). It functions in the pathway amino-acid biosynthesis; L-histidine biosynthesis; L-histidine from 5-phospho-alpha-D-ribose 1-diphosphate: step 5/9. In terms of biological role, IGPS catalyzes the conversion of PRFAR and glutamine to IGP, AICAR and glutamate. The HisF subunit catalyzes the cyclization activity that produces IGP and AICAR from PRFAR using the ammonia provided by the HisH subunit. This Herpetosiphon aurantiacus (strain ATCC 23779 / DSM 785 / 114-95) protein is Imidazole glycerol phosphate synthase subunit HisF.